The following is a 793-amino-acid chain: Putative potassium transporter 8 (793 aa).

Topologically, residues 1 to 22 (MDLEFGRGMRSPQRDSWKTTLL) are cytoplasmic. The chain crosses the membrane as a helical span at residues 23–43 (LAYQSLGVVYGDLSISPLYVF). The Extracellular portion of the chain corresponds to 44-59 (KSTFAEDIQHSETNEE). A helical transmembrane segment spans residues 60–80 (IFGVLSFVFWTLTLIPLIKYV). Residues 81–151 (SIVLRADDNG…EKHKKLHTAL (71 aa)) are Cytoplasmic-facing. A helical transmembrane segment spans residues 152–172 (LIMVLIGTCMVIGDGVLTPAI). At 173–191 (SVFSAVSGLEFSLSKDHRE) the chain is on the extracellular side. Residues 192–212 (YAVIPITCVILAFLFALQHYG) form a helical membrane-spanning segment. Over 213-215 (THR) the chain is Cytoplasmic. Residues 216–236 (VGFLFAPIVLAWLICMSALGL) form a helical membrane-spanning segment. The Extracellular segment spans residues 237–264 (YNIIHWNPHVYQALNPCYMFKFLKKTRK). Residues 265–285 (YGWMSLGGILLCMTGSEAMFA) form a helical membrane-spanning segment. Residues 286-292 (DLGHFSY) are Cytoplasmic-facing. Residues 293–313 (SAIQLAFTSLVYPALILAYMG) traverse the membrane as a helical segment. At 314–343 (QAAYLSKHHDFYSNSQVGFYIAVPDKVRWP) the chain is on the extracellular side. The chain crosses the membrane as a helical span at residues 344–364 (VLVLAILASVVGSQAIISGTF). Residues 365 to 391 (SIINQSQSLSCFPRVKVVHTSDKIHGQ) lie on the Cytoplasmic side of the membrane. The chain crosses the membrane as a helical span at residues 392–412 (IYIPEINWLLMILCIAVTVGF). Topologically, residues 413–422 (RDTKHMGNAS) are extracellular. N-linked (GlcNAc...) asparagine glycosylation is present at N420. The chain crosses the membrane as a helical span at residues 423-443 (GLAVITVMLVTTCLTSLVIML). The Cytoplasmic portion of the chain corresponds to 444–448 (CWRRP). Residues 449 to 469 (PVLALCFLLFFGSVEALYFSA) form a helical membrane-spanning segment. Topologically, residues 470–473 (SLIK) are extracellular. The chain crosses the membrane as a helical span at residues 474-494 (FLEGAWLPILLALFLMAVMLV). Topologically, residues 495-793 (WHYTTIKKYE…LLEVGMVYVL (299 aa)) are cytoplasmic. Residues 664–675 (DSVQHSSAASVE) are compositionally biased toward polar residues. The segment at 664 to 698 (DSVQHSSAASVETTTTRRRSGGGDDDGSPGGGGGR) is disordered.

It belongs to the HAK/KUP transporter (TC 2.A.72.3) family.

It is found in the membrane. Its function is as follows. High-affinity potassium transporter. This Oryza sativa subsp. japonica (Rice) protein is Putative potassium transporter 8 (HAK8).